The chain runs to 338 residues: DNA-directed RNA polymerase subunit alpha (338 aa).

The alpha N-terminal domain (alpha-NTD) stretch occupies residues 1–226 (MLIAQRPTLT…ELFGLTRELN (226 aa)). An alpha C-terminal domain (alpha-CTD) region spans residues 243–338 (YAESLGTPVE…DDDYAETEQY (96 aa)). Positions 319 to 338 (AAAEAYDEANDDDYAETEQY) are disordered. Acidic residues predominate over residues 323-338 (AYDEANDDDYAETEQY).

This sequence belongs to the RNA polymerase alpha chain family. In terms of assembly, homodimer. The RNAP catalytic core consists of 2 alpha, 1 beta, 1 beta' and 1 omega subunit. When a sigma factor is associated with the core the holoenzyme is formed, which can initiate transcription.

The catalysed reaction is RNA(n) + a ribonucleoside 5'-triphosphate = RNA(n+1) + diphosphate. DNA-dependent RNA polymerase catalyzes the transcription of DNA into RNA using the four ribonucleoside triphosphates as substrates. In Cutibacterium acnes (strain DSM 16379 / KPA171202) (Propionibacterium acnes), this protein is DNA-directed RNA polymerase subunit alpha.